The sequence spans 197 residues: Double homeobox protein 5 (197 aa).

DNA-binding regions (homeobox) lie at residues 46–105 and 121–180; these read GRRM…LRQH and GRRK…RGQS. The tract at residues 101 to 127 is disordered; that stretch reads QLRQHRRQSRPWPGRRDPQKGRRKRTA.

Belongs to the paired homeobox family. Expressed in hepatoma Hep3B cells.

The protein localises to the nucleus. This is Double homeobox protein 5 (DUX5) from Homo sapiens (Human).